The chain runs to 144 residues: Globin (144 aa).

Position 1 is an N-acetylalanine (alanine 1). Positions alanine 1–lysine 144 constitute a Globin domain. Histidine 95 is a heme b binding site.

The protein belongs to the globin family. As to quaternary structure, monomer.

This Aplysia juliana (Walking sea hare) protein is Globin.